We begin with the raw amino-acid sequence, 204 residues long: Large ribosomal subunit protein uL4 (204 aa).

The interval 53 to 73 is disordered; sequence AFVSGGGKKPWRQKGRGGARA.

It belongs to the universal ribosomal protein uL4 family. In terms of assembly, part of the 50S ribosomal subunit.

Functionally, one of the primary rRNA binding proteins, this protein initially binds near the 5'-end of the 23S rRNA. It is important during the early stages of 50S assembly. It makes multiple contacts with different domains of the 23S rRNA in the assembled 50S subunit and ribosome. Its function is as follows. Forms part of the polypeptide exit tunnel. The protein is Large ribosomal subunit protein uL4 of Campylobacter concisus (strain 13826).